The following is a 291-amino-acid chain: tRNA dimethylallyltransferase (291 aa).

9–16 (GPTASGKT) contributes to the ATP binding site. Residue 11-16 (TASGKT) coordinates substrate. Residues 34–37 (DSLQ) form an interaction with substrate tRNA region.

The protein belongs to the IPP transferase family. As to quaternary structure, monomer. Mg(2+) serves as cofactor.

It carries out the reaction adenosine(37) in tRNA + dimethylallyl diphosphate = N(6)-dimethylallyladenosine(37) in tRNA + diphosphate. Functionally, catalyzes the transfer of a dimethylallyl group onto the adenine at position 37 in tRNAs that read codons beginning with uridine, leading to the formation of N6-(dimethylallyl)adenosine (i(6)A). In Aster yellows witches'-broom phytoplasma (strain AYWB), this protein is tRNA dimethylallyltransferase.